The sequence spans 101 residues: Apolipoprotein C-II (101 aa).

The N-terminal stretch at 1-22 (MGTRFLLALFLVLLVLGFEVQG) is a signal peptide. The segment at 66–74 (TVDEKLRDM) is lipid binding. The tract at residues 78-101 (STAAMSTYAGILTDQVLSMLKGEE) is lipoprotein lipase cofactor.

Belongs to the apolipoprotein C2 family. Post-translationally, proapolipoprotein C-II is synthesized as a sialic acid containing glycoprotein which is subsequently desialylated prior to its proteolytic processing. In terms of processing, proapolipoprotein C-II, the major form found in plasma undergoes proteolytic cleavage of its N-terminal hexapeptide to generate apolipoprotein C-II, which occurs as the minor form in plasma.

The protein localises to the secreted. Component of chylomicrons, very low-density lipoproteins (VLDL), low-density lipoproteins (LDL), and high-density lipoproteins (HDL) in plasma. Plays an important role in lipoprotein metabolism as an activator of lipoprotein lipase. Both proapolipoprotein C-II and apolipoprotein C-II can activate lipoprotein lipase. This chain is Apolipoprotein C-II (APOC2), found in Plecturocebus moloch (Dusky titi monkey).